The sequence spans 1059 residues: Protein OPAQUE10 (1059 aa).

7 consecutive repeat copies span residues 269–342 (SLLE…KESC), 343–416 (SLLE…KESC), 417–490 (SPLE…KESC), 491–564 (SPLE…KESC), 565–638 (FPLE…KESC), 639–712 (SPLE…KESC), and 713–786 (SPLE…KESC). The 7 X approximate repeats stretch occupies residues 269–786 (SLLEPEDSVN…SRPIHDKESC (518 aa)). A disordered region spans residues 511-534 (FNDAPNKESEGYGESGRGKHGEKS). Over residues 515–534 (PNKESEGYGESGRGKHGEKS) the composition is skewed to basic and acidic residues. Disordered stretches follow at residues 732–756 (QYSD…EEKS), 856–875 (ETLA…DTGT), and 889–998 (SVCS…SGKG). The span at 858-869 (LADHPKKEEAGL) shows a compositional bias: basic and acidic residues. Composition is skewed to polar residues over residues 907–924 (DFSS…NTGG) and 945–958 (ASDS…PEAS). The span at 984–994 (TRGRPEGDAPR) shows a compositional bias: basic and acidic residues. A helical membrane pass occupies residues 1003–1023 (VAGGITLVGAVFFMFHLSAAL).

As to quaternary structure, homodimer. Interacts (via N-terminus) with FL1 (via C-terminus), HIP, 19 kDa alpha-zein (AC P06677), 22 kDa alpha-zein (AC O48966), 16 kDa gamma-zein (AC P08031) and 50 kDa gamma-zein (AC C0P381). As to expression, expressed in kernels.

The protein resides in the endoplasmic reticulum membrane. Its function is as follows. Cereal endosperm protein required for the ring-shaped distribution of 22 kDa alpha- and 16 kDa gamma-zeins in protein bodies. This is Protein OPAQUE10 from Zea mays (Maize).